The primary structure comprises 391 residues: 4-hydroxy-3-methylbut-2-en-1-yl diphosphate synthase (flavodoxin) (391 aa).

[4Fe-4S] cluster contacts are provided by cysteine 282, cysteine 285, cysteine 317, and glutamate 324.

This sequence belongs to the IspG family. [4Fe-4S] cluster is required as a cofactor.

It carries out the reaction (2E)-4-hydroxy-3-methylbut-2-enyl diphosphate + oxidized [flavodoxin] + H2O + 2 H(+) = 2-C-methyl-D-erythritol 2,4-cyclic diphosphate + reduced [flavodoxin]. Its pathway is isoprenoid biosynthesis; isopentenyl diphosphate biosynthesis via DXP pathway; isopentenyl diphosphate from 1-deoxy-D-xylulose 5-phosphate: step 5/6. Functionally, converts 2C-methyl-D-erythritol 2,4-cyclodiphosphate (ME-2,4cPP) into 1-hydroxy-2-methyl-2-(E)-butenyl 4-diphosphate. This is 4-hydroxy-3-methylbut-2-en-1-yl diphosphate synthase (flavodoxin) from Acidothermus cellulolyticus (strain ATCC 43068 / DSM 8971 / 11B).